The primary structure comprises 309 residues: Taste receptor type 2 member 43 (309 aa).

A topological domain (extracellular) is located at residue Met1. Residues 2-22 (ITFLPIIFSSLVVVTFVIGNF) traverse the membrane as a helical segment. Residues 23–46 (ANGFIALVNSIEWFKRQKISFADQ) are Cytoplasmic-facing. A helical membrane pass occupies residues 47–67 (ILTALAVSRVGLLWVLLLNWY). Residues 68–86 (STVLNPAFNSVEVRTTAYN) are Extracellular-facing. The helical transmembrane segment at 87–107 (IWAVINHFSNWLATSLSIFYL) threads the bilayer. Topologically, residues 108–126 (LKIANFSNFIFLHLKRRVK) are cytoplasmic. The chain crosses the membrane as a helical span at residues 127–147 (SVILVMLLGPLLFLACHLFVI). Topologically, residues 148-178 (NMNEIVRTKEFEGNMTWKIKLKSAMYFSNMT) are extracellular. Asn161 and Asn176 each carry an N-linked (GlcNAc...) asparagine glycan. The helical transmembrane segment at 179–199 (VTMVANLVPFTLTLLSFLLLI) threads the bilayer. Residues 200–229 (CSLCKHLKKMQLHGKGSQDPSTKVHIKVLQ) are Cytoplasmic-facing. The helical transmembrane segment at 230 to 250 (TVISFLLLCAIYFLSIMISVW) threads the bilayer. The Extracellular segment spans residues 251–259 (SFGSLKNKP). A helical transmembrane segment spans residues 260 to 280 (VFMFCKAMRFSYPSIHPFILI). Over 281-309 (WGNKKLKQTFLSVFWQMRYWVKGEKTSSP) the chain is Cytoplasmic.

It belongs to the G-protein coupled receptor T2R family.

It localises to the membrane. It is found in the cell projection. The protein resides in the cilium membrane. Functionally, gustducin-coupled receptor immplicated in the perception of bitter compounds in the oral cavity and the gastrointestinal tract. Signals through PLCB2 and the calcium-regulated cation channel TRPM5. Activated by the sulfonyl amide sweeteners saccharin and acesulfame K. In airway epithelial cells, binding of bitter compounds increases the intracellular calcium ion concentration and stimulates ciliary beat frequency. May act as chemosensory receptors in airway epithelial cells to detect and eliminate potential noxious agents from the airways. The chain is Taste receptor type 2 member 43 (TAS2R43) from Pan troglodytes (Chimpanzee).